The primary structure comprises 589 residues: Phenylalanine--tRNA ligase beta subunit (589 aa).

A B5 domain is found at 302-379 (LAYRKEMVRA…IAYGYNNIQM (78 aa)). The Mg(2+) site is built by Asp-357, Asp-363, Glu-366, and Asp-367.

The protein belongs to the phenylalanyl-tRNA synthetase beta subunit family. Type 2 subfamily. In terms of assembly, heterotetramer; dimer of two heterodimers formed by FARSA and FARSB. It depends on Mg(2+) as a cofactor.

The protein localises to the cytoplasm. The catalysed reaction is tRNA(Phe) + L-phenylalanine + ATP = L-phenylalanyl-tRNA(Phe) + AMP + diphosphate + H(+). The polypeptide is Phenylalanine--tRNA ligase beta subunit (FARSB) (Homo sapiens (Human)).